Consider the following 467-residue polypeptide: D-hydantoinase (467 aa).

Positions 65, 67, and 156 each coordinate Zn(2+). At Lys-156 the chain carries N6-carboxylysine. Tyr-161 provides a ligand contact to substrate. Positions 189 and 245 each coordinate Zn(2+). Ser-294 contacts substrate. Asp-321 lines the Zn(2+) pocket. A substrate-binding site is contributed by Asn-343.

The protein belongs to the metallo-dependent hydrolases superfamily. Hydantoinase/dihydropyrimidinase family. As to quaternary structure, homotetramer. Requires Zn(2+) as cofactor. Carboxylation allows a single lysine to coordinate two zinc ions.

Its function is as follows. Catalyzes the stereospecific hydrolysis of the cyclic amide bond of D-hydantoin derivatives. The protein is D-hydantoinase (hyuA) of Streptomyces coelicolor (strain ATCC BAA-471 / A3(2) / M145).